Here is a 444-residue protein sequence, read N- to C-terminus: Transcription factor PIF5 (444 aa).

Residues Glu26 to Val39 are involved in interaction with phyB. Disordered regions lie at residues His154–Glu265 and Met416–Gly444. The span at Cys155–Val171 shows a compositional bias: polar residues. The span at Asp175–Asp185 shows a compositional bias: basic and acidic residues. A compositionally biased stretch (low complexity) spans Ser187–Gly197. The segment covering Glu224–Lys244 has biased composition (polar residues). Residues Arg256–Glu265 show a composition bias toward basic and acidic residues. The region spanning Arg256–Leu305 is the bHLH domain. The segment covering Gly424–Ser437 has biased composition (polar residues). Ser437 is modified (phosphoserine).

In terms of assembly, homodimer. Interacts specifically with the Pfr form of phytochrome B and with TOC1/APRR1. May form a heterodimer with PIF3. Interacts with PHYB, CRY1 and CRY2 in the nucleus in response to low blue light (LBL). Interacts with TOPP4. Associates to PTAC12/HMR/PAP5 which acts as a transcriptional coactivator. Phosphorylated. Additional phosphorylations induced within 60 seconds following phytochrome B photoactivation. Post-translationally, dephosphorylated by TOPP4 during photomorphogenesis, leading to subsequent degradation of PIF5 by the proteasomal pathway. Mainly expressed in leaves and seedlings, and, to a lower extent, in stems, fruits, flowers and roots.

It localises to the nucleus. Its function is as follows. Transcription factor acting negatively in the phytochrome B signaling pathway to promote the shade-avoidance response. Regulates PHYB abundance at the post-transcriptional level, possibly via the ubiquitin-proteasome pathway. Promotes ethylene activity in the dark. May regulate the expression of a subset of genes by binding to the G-box motif. Might be involved in the integration of light-signals to control both circadian and photomorphogenic processes. Activated by CRY1 and CRY2 in response to low blue light (LBL) by direct binding at chromatin on E-box variant 5'-CA[CT]GTG-3' to stimulate specific gene expression to adapt global physiology (e.g. hypocotyl elongation in low blue light). The polypeptide is Transcription factor PIF5 (Arabidopsis thaliana (Mouse-ear cress)).